The chain runs to 266 residues: Chymotrypsin-like elastase family member 1 (266 aa).

An N-terminal signal peptide occupies residues 1 to 16 (MLRFLVLATLVLYGHS). Positions 17–26 (TRDFPETNAR) are cleaved as a propeptide — activation peptide. The Peptidase S1 domain maps to 27–264 (VVGGTEARKN…YISWINNVIA (238 aa)). The cysteines at positions 56 and 72 are disulfide-linked. Residue His-71 is the Charge relay system of the active site. The Ca(2+) site is built by Glu-85, Asn-87, Gln-90, and Glu-95. N-linked (GlcNAc...) asparagine glycosylation occurs at Asn-87. Asp-119 serves as the catalytic Charge relay system. 3 cysteine pairs are disulfide-bonded: Cys-153/Cys-220, Cys-184/Cys-200, and Cys-210/Cys-240. The active-site Charge relay system is Ser-214. Residue Asn-241 is glycosylated (N-linked (GlcNAc...) asparagine).

This sequence belongs to the peptidase S1 family. Elastase subfamily. It depends on Ca(2+) as a cofactor.

The protein localises to the secreted. It carries out the reaction Hydrolysis of proteins, including elastin. Preferential cleavage: Ala-|-Xaa.. Serine proteases that hydrolyze many proteins in addition to elastin. The protein is Chymotrypsin-like elastase family member 1 (CELA1) of Felis catus (Cat).